A 267-amino-acid polypeptide reads, in one-letter code: Short-chain dehydrogenase/reductase GME11361 (267 aa).

NADP(+) contacts are provided by isoleucine 10, threonine 36, lysine 42, aspartate 57, asparagine 80, tyrosine 129, lysine 133, valine 162, and serine 164. The active-site Proton acceptor is the tyrosine 129. Lysine 133 serves as the catalytic Lowers pKa of active site Tyr.

Belongs to the short-chain dehydrogenases/reductases (SDR) family.

It functions in the pathway secondary metabolite biosynthesis. In terms of biological role, short-chain dehydrogenase/reductase; part of the gene cluster that mediates the biosynthesis of dibenzodioxocinones such as pestalotiollide B, a novel class of inhibitors against cholesterol ester transfer protein (CEPT). The biosynthesis initiates from condensation of acetate and malonate units catalyzed by the non-reducing PKS pks8/GME11356. Pks8/GME11356 lacks a thioesterase (TE) domain, which is important to the cyclizing of the third ring of atrochrysone carboxylic acid, and the esterase GME11355 might play the role of TE and catalyzes the cyclization reaction of the C ring. The lactamase-like protein GME11357 (or other beta-lactamases in Pestalotiopsis microspora) probably hydrolyzes the thioester bond between the ACP of pks8/GME11356 and the intermediate to release atrochrysone carboxylic acid, which is spontaneously dehydrates to form endocrocin anthrone. Endocrocin anthrone is further converted to emodin via the endocrocin intermediate. Emodin is then oxidized by several enzymes such as the Baeyer-Villiger oxidase GME11358, the oxidoreductase GME11367, the short chain dehydrogenase/reductase GME11373, as well as by other oxidoreductases from the cluster, to modify the A and C rings and open the B ring, and finally yield monodictyphenone. The prenyltransferase GME11375 may catalyze the addition reaction between the C5 side chains and the carbon bone of dibenzodioxocinones. The remaining biochemical reactions to the final product dibenzodioxocinones should be methylation catalyzed by methyltransferase GME11366 and reduction and lactonization reaction catalyzed by a series of oxidordeuctases. The protein is Short-chain dehydrogenase/reductase GME11361 of Pestalotiopsis microspora.